We begin with the raw amino-acid sequence, 373 residues long: Glutamate 5-kinase (373 aa).

Residue Lys-15 coordinates ATP. Substrate-binding residues include Ser-55, Asp-142, and Asn-154. Thr-174–Asp-175 provides a ligand contact to ATP. Residues Arg-281–Val-359 form the PUA domain.

This sequence belongs to the glutamate 5-kinase family.

It localises to the cytoplasm. The enzyme catalyses L-glutamate + ATP = L-glutamyl 5-phosphate + ADP. It participates in amino-acid biosynthesis; L-proline biosynthesis; L-glutamate 5-semialdehyde from L-glutamate: step 1/2. In terms of biological role, catalyzes the transfer of a phosphate group to glutamate to form L-glutamate 5-phosphate. This Nitrosomonas eutropha (strain DSM 101675 / C91 / Nm57) protein is Glutamate 5-kinase.